Consider the following 445-residue polypeptide: tRNA-2-methylthio-N(6)-dimethylallyladenosine synthase (445 aa).

Residues 2–122 (KKAFVKSYGC…LPDLLARSRE (121 aa)) enclose the MTTase N-terminal domain. [4Fe-4S] cluster contacts are provided by C11, C47, C85, C157, C161, and C164. A Radical SAM core domain is found at 143-378 (RTLGASAFLT…LDSQRHAYQR (236 aa)). The 63-residue stretch at 378 to 440 (RAAAGRVFDV…SNSLFGELVS (63 aa)) folds into the TRAM domain.

This sequence belongs to the methylthiotransferase family. MiaB subfamily. In terms of assembly, monomer. It depends on [4Fe-4S] cluster as a cofactor.

It localises to the cytoplasm. It catalyses the reaction N(6)-dimethylallyladenosine(37) in tRNA + (sulfur carrier)-SH + AH2 + 2 S-adenosyl-L-methionine = 2-methylsulfanyl-N(6)-dimethylallyladenosine(37) in tRNA + (sulfur carrier)-H + 5'-deoxyadenosine + L-methionine + A + S-adenosyl-L-homocysteine + 2 H(+). Functionally, catalyzes the methylthiolation of N6-(dimethylallyl)adenosine (i(6)A), leading to the formation of 2-methylthio-N6-(dimethylallyl)adenosine (ms(2)i(6)A) at position 37 in tRNAs that read codons beginning with uridine. The protein is tRNA-2-methylthio-N(6)-dimethylallyladenosine synthase of Methylobacterium radiotolerans (strain ATCC 27329 / DSM 1819 / JCM 2831 / NBRC 15690 / NCIMB 10815 / 0-1).